The chain runs to 395 residues: Elongation factor Tu (395 aa).

One can recognise a tr-type G domain in the interval 10 to 204 (KPHVNIGTIG…TVDSYIPEPK (195 aa)). Residues 19 to 26 (GHVDHGKT) are G1. 19-26 (GHVDHGKT) serves as a coordination point for GTP. T26 contributes to the Mg(2+) binding site. The interval 60-64 (GITIN) is G2. The tract at residues 81–84 (DAPG) is G3. GTP-binding positions include 81–85 (DAPGH) and 136–139 (NKTD). Residues 136 to 139 (NKTD) are G4. Positions 174-176 (SAL) are G5.

Belongs to the TRAFAC class translation factor GTPase superfamily. Classic translation factor GTPase family. EF-Tu/EF-1A subfamily. In terms of assembly, monomer.

It localises to the cytoplasm. The catalysed reaction is GTP + H2O = GDP + phosphate + H(+). Its function is as follows. GTP hydrolase that promotes the GTP-dependent binding of aminoacyl-tRNA to the A-site of ribosomes during protein biosynthesis. This chain is Elongation factor Tu, found in Leuconostoc citreum (strain KM20).